The chain runs to 285 residues: Tropomyosin (285 aa).

Residues 1–273 (MDAIKKKMQA…KEKYREIGDD (273 aa)) adopt a coiled-coil conformation.

This sequence belongs to the tropomyosin family. In terms of assembly, homodimer.

Functionally, tropomyosin, in association with the troponin complex, plays a central role in the calcium dependent regulation of muscle contraction. The chain is Tropomyosin from Chironomus kiiensis (Midge).